The primary structure comprises 230 residues: Flagellar L-ring protein (230 aa).

Residues 1-18 (MNRLNIAVSCLATALLFG) form the signal peptide. The N-palmitoyl cysteine moiety is linked to residue Cys19. Cys19 is lipidated: S-diacylglycerol cysteine.

The protein belongs to the FlgH family. The basal body constitutes a major portion of the flagellar organelle and consists of four rings (L,P,S, and M) mounted on a central rod.

The protein resides in the cell outer membrane. It is found in the bacterial flagellum basal body. Assembles around the rod to form the L-ring and probably protects the motor/basal body from shearing forces during rotation. This Legionella pneumophila (strain Paris) protein is Flagellar L-ring protein.